The chain runs to 451 residues: Trimethylamine monooxygenase (451 aa).

FAD is bound by residues Ser-12, Glu-37, Gln-39, Leu-45, Trp-46, and His-62. NADP(+)-binding residues include Trp-70 and Asn-72. FAD is bound by residues Asn-72 and Val-125. Residues Ser-204, Ser-205, Ser-207, and Arg-228 each coordinate NADP(+). Residues Gln-317 and Thr-320 each contribute to the FAD site. Arg-411 provides a ligand contact to NADP(+).

The protein belongs to the FMO family. The cofactor is FAD.

The catalysed reaction is trimethylamine + NADPH + O2 = trimethylamine N-oxide + NADP(+) + H2O. In terms of biological role, catalyzes the oxidation of trimethylamine (TMA) to produce trimethylamine N-oxide (TMAO). In vitro, has a broad substrate specificity, oxidizing many nitrogen- and sulfur-containing compounds, including dimethylamine (DMA), dimethylsulfide (DMS), dimethylsulfoxide (DMSO), cysteamine, methimazole and dimethylaniline. The protein is Trimethylamine monooxygenase of Methylocella silvestris (strain DSM 15510 / CIP 108128 / LMG 27833 / NCIMB 13906 / BL2).